Here is a 555-residue protein sequence, read N- to C-terminus: WRKY transcription factor WRKY24 (555 aa).

Disordered stretches follow at residues 38–65 and 132–248; these read GGGGVSRYKAMTPPSLPLSPPPVSPSSF and QTAP…CTFP. Over residues 51 to 61 the composition is skewed to pro residues; that stretch reads PSLPLSPPPVS. A compositionally biased stretch (low complexity) spans 163 to 194; the sequence is QQQQQPWGYQQQPAGMDAGANAASFGAAPFQA. Residues 214-278 constitute a DNA-binding region (WRKY 1); it reads SQRRSSDDGY…YKGTHNHAKP (65 aa). Residues 253-259 carry the Nuclear localization signal motif; sequence KKKVERS. A disordered region spans residues 270-367; the sequence is KGTHNHAKPQ…EGISMAGNRT (98 aa). 2 stretches are compositionally biased toward polar residues: residues 277 to 294 and 310 to 320; these read KPQNTRRNSGSSAAQVLQ and TAATPENSSAS. The span at 347-356 shows a compositional bias: basic and acidic residues; it reads DSKRWRKDGD. Residues 379 to 444 constitute a DNA-binding region (WRKY 2); that stretch reads SDIDILDDGY…YEGKHNHDVP (66 aa). The segment at 466–555 is transcription repression of gibberellic acid (GA)-induced promoters; sequence HPYLPNQPPP…DDMFFQNSLY (90 aa). Disordered regions lie at residues 471–498 and 513–555; these read NQPPPMSYQPTGPQPYALRPDGFGGQGP and GFDD…NSLY.

The protein belongs to the WRKY group II-a family. In terms of tissue distribution, expressed in aleurone cells. Mostly expressed in aleurone layers and leaves, and, to a lower extent, in roots, panicles and embryos.

Its subcellular location is the nucleus. Transcription repressor. Interacts specifically with the W box (5'-(T)TGAC[CT]-3'), a frequently occurring elicitor-responsive cis-acting element. Negative regulator of both gibberellic acid (GA) and abscisic acid (ABA) signaling in aleurone cells, probably by interfering with GAM1, via the specific repression of GA- and ABA-induced promoters. The sequence is that of WRKY transcription factor WRKY24 from Oryza sativa subsp. indica (Rice).